The following is a 1416-amino-acid chain: DNA-directed RNA polymerase subunit beta' (1416 aa).

Residues C71, C73, C86, and C89 each coordinate Zn(2+). Positions 461, 463, and 465 each coordinate Mg(2+). 4 residues coordinate Zn(2+): C815, C889, C896, and C899.

This sequence belongs to the RNA polymerase beta' chain family. As to quaternary structure, the RNAP catalytic core consists of 2 alpha, 1 beta, 1 beta' and 1 omega subunit. When a sigma factor is associated with the core the holoenzyme is formed, which can initiate transcription. Mg(2+) is required as a cofactor. Requires Zn(2+) as cofactor.

The catalysed reaction is RNA(n) + a ribonucleoside 5'-triphosphate = RNA(n+1) + diphosphate. Functionally, DNA-dependent RNA polymerase catalyzes the transcription of DNA into RNA using the four ribonucleoside triphosphates as substrates. The chain is DNA-directed RNA polymerase subunit beta' from Haemophilus influenzae (strain 86-028NP).